We begin with the raw amino-acid sequence, 33 residues long: Photosystem II reaction center protein Psb30 (33 aa).

The helical transmembrane segment at 5 to 25 (VIAQLTMLTIAVITGPLVIFF) threads the bilayer.

This sequence belongs to the Psb30/Ycf12 family. As to quaternary structure, PSII is composed of 1 copy each of membrane proteins PsbA, PsbB, PsbC, PsbD, PsbE, PsbF, PsbH, PsbI, PsbJ, PsbK, PsbL, PsbM, PsbT, PsbX, PsbY, PsbZ, Psb30/Ycf12, peripheral proteins of the oxygen-evolving complex and a large number of cofactors. It forms dimeric complexes.

It is found in the plastid. The protein localises to the chloroplast thylakoid membrane. A core subunit of photosystem II (PSII), probably helps stabilize the reaction center. The polypeptide is Photosystem II reaction center protein Psb30 (Welwitschia mirabilis (Tree tumbo)).